We begin with the raw amino-acid sequence, 126 residues long: MLLNMLKCKLHRARVTHAELHYEGSCGIDGDLLDLAGLRENESIDIYNVTNGKRFRTYAIRAEAGSGIISLNGAAAHMADLGDIVIICAYAHFDEVEASTYQPRLVYCNEDNTVKDTANIIPVQVA.

Ser-25 acts as the Schiff-base intermediate with substrate; via pyruvic acid in catalysis. A Pyruvic acid (Ser) modification is found at Ser-25. Thr-57 provides a ligand contact to substrate. Tyr-58 serves as the catalytic Proton donor. 73–75 provides a ligand contact to substrate; the sequence is GAA.

It belongs to the PanD family. As to quaternary structure, heterooctamer of four alpha and four beta subunits. Pyruvate serves as cofactor. In terms of processing, is synthesized initially as an inactive proenzyme, which is activated by self-cleavage at a specific serine bond to produce a beta-subunit with a hydroxyl group at its C-terminus and an alpha-subunit with a pyruvoyl group at its N-terminus.

Its subcellular location is the cytoplasm. The enzyme catalyses L-aspartate + H(+) = beta-alanine + CO2. It participates in cofactor biosynthesis; (R)-pantothenate biosynthesis; beta-alanine from L-aspartate: step 1/1. Functionally, catalyzes the pyruvoyl-dependent decarboxylation of aspartate to produce beta-alanine. This is Aspartate 1-decarboxylase from Psychrobacter arcticus (strain DSM 17307 / VKM B-2377 / 273-4).